Reading from the N-terminus, the 139-residue chain is Thiosulfate:glutathione sulfurtransferase (139 aa).

Ser-26 is modified (phosphoserine). The 102-residue stretch at 37–138 folds into the Rhodanese domain; it reads HDPNVVLVDV…WVSHGGDKLD (102 aa). The Cysteine persulfide intermediate role is filled by Cys-98.

It is found in the mitochondrion. It carries out the reaction thiosulfate + glutathione = S-sulfanylglutathione + sulfite + H(+). GSS(-) is a potent inhibitor of RDL1, since the presence of the sulfur dioxygenase strongly increases the RDL1 catalytic activity. Functionally, thiosulfate:glutathione sulfurtransferase (TST) required to produce S-sulfanylglutathione (GSS(-)), a central intermediate in hydrogen sulfide metabolism. Provides the link between the first step in H(2)S metabolism performed by the sulfide:quinone oxidoreductase (SQOR) which catalyzes the conversion of H(2)S to thiosulfate, and the sulfur dioxygenase (SDO) which uses GSS(-) as substrate. The thermodynamic coupling of the irreversible SDO and reversible TST reactions provides a model for the physiologically relevant reaction with thiosulfate as the sulfane donor. The sequence is that of Thiosulfate:glutathione sulfurtransferase (RDL1) from Saccharomyces cerevisiae (strain ATCC 204508 / S288c) (Baker's yeast).